We begin with the raw amino-acid sequence, 292 residues long: 4-hydroxy-tetrahydrodipicolinate synthase (292 aa).

Thr45 is a pyruvate binding site. Tyr133 acts as the Proton donor/acceptor in catalysis. Lys161 functions as the Schiff-base intermediate with substrate in the catalytic mechanism. Ile203 is a binding site for pyruvate.

The protein belongs to the DapA family. In terms of assembly, homotetramer; dimer of dimers.

The protein resides in the cytoplasm. The catalysed reaction is L-aspartate 4-semialdehyde + pyruvate = (2S,4S)-4-hydroxy-2,3,4,5-tetrahydrodipicolinate + H2O + H(+). It functions in the pathway amino-acid biosynthesis; L-lysine biosynthesis via DAP pathway; (S)-tetrahydrodipicolinate from L-aspartate: step 3/4. Its function is as follows. Catalyzes the condensation of (S)-aspartate-beta-semialdehyde [(S)-ASA] and pyruvate to 4-hydroxy-tetrahydrodipicolinate (HTPA). The sequence is that of 4-hydroxy-tetrahydrodipicolinate synthase from Shigella boydii serotype 18 (strain CDC 3083-94 / BS512).